The following is a 120-amino-acid chain: Glycine cleavage system H protein (120 aa).

In terms of domain architecture, Lipoyl-binding spans 17 to 99; the sequence is VATVGITAHA…QGAGWLYRLK (83 aa). At Lys-58 the chain carries N6-lipoyllysine.

Belongs to the GcvH family. In terms of assembly, the glycine cleavage system is composed of four proteins: P, T, L and H. It depends on (R)-lipoate as a cofactor.

Functionally, the glycine cleavage system catalyzes the degradation of glycine. The H protein shuttles the methylamine group of glycine from the P protein to the T protein. The protein is Glycine cleavage system H protein of Methylorubrum populi (strain ATCC BAA-705 / NCIMB 13946 / BJ001) (Methylobacterium populi).